The primary structure comprises 145 residues: D-aminoacyl-tRNA deacylase (145 aa).

The Gly-cisPro motif, important for rejection of L-amino acids signature appears at G137–P138.

Belongs to the DTD family. Homodimer.

The protein resides in the cytoplasm. It carries out the reaction glycyl-tRNA(Ala) + H2O = tRNA(Ala) + glycine + H(+). It catalyses the reaction a D-aminoacyl-tRNA + H2O = a tRNA + a D-alpha-amino acid + H(+). Its function is as follows. An aminoacyl-tRNA editing enzyme that deacylates mischarged D-aminoacyl-tRNAs. Also deacylates mischarged glycyl-tRNA(Ala), protecting cells against glycine mischarging by AlaRS. Acts via tRNA-based rather than protein-based catalysis; rejects L-amino acids rather than detecting D-amino acids in the active site. By recycling D-aminoacyl-tRNA to D-amino acids and free tRNA molecules, this enzyme counteracts the toxicity associated with the formation of D-aminoacyl-tRNA entities in vivo and helps enforce protein L-homochirality. This Escherichia coli O7:K1 (strain IAI39 / ExPEC) protein is D-aminoacyl-tRNA deacylase.